The sequence spans 261 residues: MIETYNQPVPRSAATGPPVSMKIFMYLLTVFLITQMIGSALFAVYLHRRLDKIEDERNLHEDFVFMKTIQRCNTGERSLSLLNCEEIKSQFEGFVKDIMLNKEEKKKENSFEMQKGDQNPQIAAHVISEASSKTTSVLQWAEKGYYTMSNNLVTLENGKQLTVKRQGLYYIYAQVTFCSNREASSQAPFIASLCLKPPNRFERILLRAANTHSSAKPCGQQSIHLGGIFELQPGASVFVNVTDPSQVSHGTGFTSFGLLKL.

Topologically, residues 1 to 22 (MIETYNQPVPRSAATGPPVSMK) are cytoplasmic. Residues 23 to 43 (IFMYLLTVFLITQMIGSALFA) traverse the membrane as a helical; Signal-anchor for type II membrane protein segment. At 44-261 (VYLHRRLDKI…GFTSFGLLKL (218 aa)) the chain is on the extracellular side. A THD domain is found at 122–261 (IAAHVISEAS…GFTSFGLLKL (140 aa)). C178 and C218 are oxidised to a cystine. N240 carries N-linked (GlcNAc...) asparagine glycosylation.

This sequence belongs to the tumor necrosis factor family. Homotrimer. Interacts with CD28. CD40 ligand, soluble form: Exists as either a monomer or a homotrimer. Forms a ternary complex between CD40 and integrins for CD40-CD40LG signaling. Post-translationally, the soluble form derives from the membrane form by proteolytic processing.

Its subcellular location is the cell membrane. The protein localises to the cell surface. It localises to the secreted. In terms of biological role, cytokine that acts as a ligand to CD40/TNFRSF5. Costimulates T-cell proliferation and cytokine production. Its cross-linking on T-cells generates a costimulatory signal which enhances the production of IL4 and IL10 in conjunction with the TCR/CD3 ligation and CD28 costimulation. Induces the activation of NF-kappa-B. Induces the activation of kinases MAPK8 and PAK2 in T-cells. Mediates B-cell proliferation in the absence of co-stimulus as well as IgE production in the presence of IL4. Involved in immunoglobulin class switching. Its function is as follows. Acts as a ligand for integrins, specifically ITGA5:ITGB1 and ITGAV:ITGB3; both integrins and the CD40 receptor are required for activation of CD40-CD40LG signaling, which have cell-type dependent effects, such as B-cell activation, NF-kappa-B signaling and anti-apoptotic signaling. This is CD40 ligand (CD40LG) from Callithrix jacchus (White-tufted-ear marmoset).